The following is a 197-amino-acid chain: Putative methyltransferase Mtx subunit A (197 aa).

This sequence belongs to the MtrA family. In terms of assembly, may be part of a complex composed of 3 subunits; MtxA, MtxH and MtxX.

The chain is Putative methyltransferase Mtx subunit A (mtxA) from Methanosarcina acetivorans (strain ATCC 35395 / DSM 2834 / JCM 12185 / C2A).